The primary structure comprises 114 residues: Fumarate reductase subunit D (114 aa).

The next 3 helical transmembrane spans lie at 24–44 (VSAIFLPVVILIIGLLLPFGL), 50–70 (LITFAYSWIGKLVILVLTIFP), and 92–112 (GGFIFYGLATIYTVWVLFAVI).

This sequence belongs to the FrdD family. As to quaternary structure, part of an enzyme complex containing four subunits: a flavoprotein (FrdA), an iron-sulfur protein (FrdB), and two hydrophobic anchor proteins (FrdC and FrdD).

It localises to the cell inner membrane. In terms of biological role, anchors the catalytic components of the fumarate reductase complex to the cell membrane, binds quinones. This Haemophilus influenzae (strain ATCC 51907 / DSM 11121 / KW20 / Rd) protein is Fumarate reductase subunit D.